The sequence spans 581 residues: DNA polymerase alpha subunit B (581 aa).

It belongs to the DNA polymerase alpha subunit B family. DNA polymerase alpha:primase is a four subunit enzyme complex, which is assembled throughout the cell cycle, and consists of the two DNA polymerase subunits A and B, and the DNA primase large and small subunits. Subunit B binds to subunit A.

The protein localises to the nucleus. In terms of biological role, may play an essential role at the early stage of chromosomal DNA replication by coupling the polymerase alpha/primase complex to the cellular replication machinery. Required for the distribution of pie-1 in cell divsion. In Caenorhabditis elegans, this protein is DNA polymerase alpha subunit B (div-1).